The following is a 59-amino-acid chain: Protein ORF5a (59 aa).

A helical; Signal-anchor for type III membrane protein transmembrane segment spans residues 13 to 33; it reads VIYDCIAILALGCAITCLLLI.

It localises to the membrane. This is Protein ORF5a (GP5) from Equine arteritis virus (strain Bucyrus) (EAV).